A 210-amino-acid polypeptide reads, in one-letter code: Mediator of RNA polymerase II transcription subunit 20 (210 aa).

This sequence belongs to the Mediator complex subunit 20 family. As to quaternary structure, component of the Mediator complex, which is composed of at least 21 subunits that form three structurally distinct submodules. The Mediator head module contains MED6, MED8, MED11, SRB4/MED17, SRB5/MED18, ROX3/MED19, SRB2/MED20 and SRB6/MED22, the middle module contains MED1, MED4, NUT1/MED5, MED7, CSE2/MED9, NUT2/MED10, SRB7/MED21 and SOH1/MED31, and the tail module contains MED2, PGD1/MED3, RGR1/MED14, GAL11/MED15 and SIN4/MED16. The head and the middle modules interact directly with RNA polymerase II, whereas the elongated tail module interacts with gene-specific regulatory proteins. MED1 interacts directly with MED4 and MED7. SRB2/MED20 interacts directly with SRB4/MED17 and SRB5/MED18.

The protein localises to the nucleus. Component of the Mediator complex, a coactivator involved in the regulated transcription of nearly all RNA polymerase II-dependent genes. Mediator functions as a bridge to convey information from gene-specific regulatory proteins to the basal RNA polymerase II transcription machinery. The Mediator complex, having a compact conformation in its free form, is recruited to promoters by direct interactions with regulatory proteins and serves for the assembly of a functional preinitiation complex with RNA polymerase II and the general transcription factors. The Mediator complex unfolds to an extended conformation and partially surrounds RNA polymerase II, specifically interacting with the unphosphorylated form of the C-terminal domain (CTD) of RNA polymerase II. The Mediator complex dissociates from the RNA polymerase II holoenzyme and stays at the promoter when transcriptional elongation begins. This Saccharomyces cerevisiae (strain ATCC 204508 / S288c) (Baker's yeast) protein is Mediator of RNA polymerase II transcription subunit 20 (SRB2).